The sequence spans 896 residues: Translation initiation factor IF-2 (896 aa).

Basic and acidic residues predominate over residues 117-174 (AEAEAKAKAEAEAKAKVDAEAKVKAKAEAEAKAKAKVQTEKPAAETAEDKAAKAEEAK). The interval 117-303 (AEAEAKAKAE…TRSVAPESMD (187 aa)) is disordered. The segment covering 175–195 (LLAAQDAVAKAKANEEASAAA) has biased composition (low complexity). The segment covering 196–227 (DEARRLAEENEKRWAEEEKARKEAEKSVDHHV) has biased composition (basic and acidic residues). The segment covering 254 to 268 (PSANAGNNANANAGA) has biased composition (low complexity). Positions 396-563 (PRAPVVTIMG…GILLEAEVLE (168 aa)) constitute a tr-type G domain. Residues 405–412 (GHVDHGKT) form a G1 region. Position 405 to 412 (405 to 412 (GHVDHGKT)) interacts with GTP. The G2 stretch occupies residues 430 to 434 (GITQH). A G3 region spans residues 451–454 (DTPG). GTP contacts are provided by residues 451-455 (DTPGH) and 505-508 (NKID). The G4 stretch occupies residues 505-508 (NKID). Residues 541–543 (SAK) form a G5 region.

It belongs to the TRAFAC class translation factor GTPase superfamily. Classic translation factor GTPase family. IF-2 subfamily.

The protein resides in the cytoplasm. In terms of biological role, one of the essential components for the initiation of protein synthesis. Protects formylmethionyl-tRNA from spontaneous hydrolysis and promotes its binding to the 30S ribosomal subunits. Also involved in the hydrolysis of GTP during the formation of the 70S ribosomal complex. This Shewanella pealeana (strain ATCC 700345 / ANG-SQ1) protein is Translation initiation factor IF-2.